A 390-amino-acid chain; its full sequence is 4-hydroxycoumarin synthase 1 (390 aa).

Cys-161 is an active-site residue.

This sequence belongs to the thiolase-like superfamily. Chalcone/stilbene synthases family. As to quaternary structure, homodimer.

The catalysed reaction is 2-hydroxybenzoyl-CoA + malonyl-CoA = 4-hydroxycoumarin + CO2 + 2 CoA. In terms of biological role, type III polyketide synthase involved preferentially in the biosynthesis of 4-hydroxycoumarin from salicoyl-CoA. Can also use benzoyl-CoA and malonyl-CoA to produce 3,5-dihydroxybiphenyl as a major product and benzoyldiacetic acid lactone as a minor side product. Can also use m-hydroxybenzoyl-CoA as substrate, producing m-hydroxybenzoyl diacetic acid lactone as a derailment product. No activity with p-hydroxybenzoyl-CoA, CoA-linked cinnamic acids or acetyl-CoA. This chain is 4-hydroxycoumarin synthase 1 (BIS2), found in Sorbus aucuparia (European mountain ash).